The primary structure comprises 380 residues: Putative ankyrin repeat protein RF_1306 (380 aa).

ANK repeat units lie at residues 48-76 (NKWS…NINA), 80-109 (KCRT…KIAP), 112-143 (YGWS…KYDK), 170-199 (NNKT…KFDI), 203-233 (LGYK…GKNT), 239-268 (LEKV…GFDK), 270-299 (LGQK…DAQY), 303-333 (LGRS…DINY), and 337-366 (SGLN…YESY).

This Rickettsia felis (strain ATCC VR-1525 / URRWXCal2) (Rickettsia azadi) protein is Putative ankyrin repeat protein RF_1306.